Reading from the N-terminus, the 608-residue chain is Histone-arginine methyltransferase CARM1 (608 aa).

The interval 28–139 (ATVSVFPGAR…GHTLERSVFS (112 aa)) is interaction with C9orf72. An SAM-dependent MTase PRMT-type domain is found at 147-454 (AVQYFQFYGY…KRQSYDISIV (308 aa)). S-adenosyl-L-methionine contacts are provided by Q160, R169, G193, and E215. S217 carries the post-translational modification Phosphoserine. K228 participates in a covalent cross-link: Glycyl lysine isopeptide (Lys-Gly) (interchain with G-Cter in ubiquitin). S-adenosyl-L-methionine-binding residues include E244 and S272. Residues 347–380 (RILMAKSVKYTVNFLEAKEGDLHRIEIPFKFHML) are required for nuclear translocation. The segment at 500 to 608 (TGSTYNLSSG…IPTNTMHYGS (109 aa)) is transactivation domain. Residue R551 is modified to Dimethylated arginine.

This sequence belongs to the class I-like SAM-binding methyltransferase superfamily. Protein arginine N-methyltransferase family. Homodimer. Interacts with NR1H4. Interacts with SNRPC. Interacts with the C-terminus of NCOA2/GRIP1, NCO3/ACTR and NCOA1/SRC1. Part of a complex consisting of CARM1, EP300/P300 and NCOA2/GRIP1. Interacts with FLII, TP53, myogenic factor MEF2, EP300/P300, TRIM24, CREBBP and CTNNB1. Interacts with RELA. Identified in a complex containing CARM1, TRIM24 and NCOA2/GRIP1. Interacts with NCOA3/SRC3. Interacts with SKP2. Interacts (via PH domain-like fold) with C9orf72. Interacts with PARP1; promoting PARP1 recruimtent to replication forks. In terms of processing, phosphorylation at Ser-217 is strongly increased during mitosis, and decreases rapidly to a very low, basal level after entry into the G1 phase of the cell cycle. Phosphorylation at Ser-217 interferes with S-adenosyl-L-methionine binding and strongly reduces methyltransferase activity. Phosphorylation at Ser-217 may promote cytosolic location. Auto-methylated on Arg-551. Methylation enhances transcription coactivator activity. Methylation is required for its role in the regulation of pre-mRNA alternative splicing. Post-translationally, ubiquitinated by E3 ubiquitin-protein ligase complex containing FBXO9 at Lys-228; leading to proteasomal degradation. Ubiquitously expressed. Within the brain, present in proliferating cells from lateral ventricular zone and dentate gyrus (at protein level).

Its subcellular location is the nucleus. It is found in the cytoplasm. It localises to the chromosome. The catalysed reaction is L-arginyl-[protein] + 2 S-adenosyl-L-methionine = N(omega),N(omega)-dimethyl-L-arginyl-[protein] + 2 S-adenosyl-L-homocysteine + 2 H(+). Its activity is regulated as follows. Methylation of H3R17 (H3R17me) by CARM1 is stimulated by preacetylation of H3 'Lys-18' (H3K18ac) H3 'Lys-23' (H3K23ac) by EP300 and blocked by citrullination of H3 'Arg-17' (H3R17ci) by PADI4. Functionally, methylates (mono- and asymmetric dimethylation) the guanidino nitrogens of arginyl residues in several proteins involved in DNA packaging, transcription regulation, pre-mRNA splicing, and mRNA stability. Recruited to promoters upon gene activation together with histone acetyltransferases from EP300/P300 and p160 families, methylates histone H3 at 'Arg-17' (H3R17me), forming mainly asymmetric dimethylarginine (H3R17me2a), leading to activation of transcription via chromatin remodeling. During nuclear hormone receptor activation and TCF7L2/TCF4 activation, acts synergically with EP300/P300 and either one of the p160 histone acetyltransferases NCOA1/SRC1, NCOA2/GRIP1 and NCOA3/ACTR or CTNNB1/beta-catenin to activate transcription. During myogenic transcriptional activation, acts together with NCOA3/ACTR as a coactivator for MEF2C. During monocyte inflammatory stimulation, acts together with EP300/P300 as a coactivator for NF-kappa-B. Acts as a coactivator for PPARG, promotes adipocyte differentiation and the accumulation of brown fat tissue. Plays a role in the regulation of pre-mRNA alternative splicing by methylation of splicing factors. Also seems to be involved in p53/TP53 transcriptional activation. Methylates EP300/P300, both at 'Arg-2142', which may loosen its interaction with NCOA2/GRIP1, and at 'Arg-580' and 'Arg-604' in the KIX domain, which impairs its interaction with CREB and inhibits CREB-dependent transcriptional activation. Also methylates arginine residues in RNA-binding proteins PABPC1, ELAVL1 and ELAV4, which may affect their mRNA-stabilizing properties and the half-life of their target mRNAs. Acts as a transcriptional coactivator of ACACA/acetyl-CoA carboxylase by enriching H3R17 methylation at its promoter, thereby positively regulating fatty acid synthesis. Independently of its methyltransferase activity, involved in replication fork progression: promotes PARP1 recruitment to replication forks, leading to poly-ADP-ribosylation of chromatin at replication forks and reduced fork speed. In Mus musculus (Mouse), this protein is Histone-arginine methyltransferase CARM1 (Carm1).